The following is a 132-amino-acid chain: Large ribosomal subunit protein bL17 (132 aa).

Belongs to the bacterial ribosomal protein bL17 family. In terms of assembly, part of the 50S ribosomal subunit. Contacts protein L32.

This chain is Large ribosomal subunit protein bL17, found in Shewanella woodyi (strain ATCC 51908 / MS32).